The following is a 166-amino-acid chain: Endoribonuclease YbeY (166 aa).

Zn(2+) is bound by residues H111, H115, and H121. Residues 141 to 166 (LGYPDPYAEDESADHPHSDTPSKDHE) form a disordered region. Positions 153 to 166 (ADHPHSDTPSKDHE) are enriched in basic and acidic residues.

It belongs to the endoribonuclease YbeY family. Zn(2+) is required as a cofactor.

The protein resides in the cytoplasm. In terms of biological role, single strand-specific metallo-endoribonuclease involved in late-stage 70S ribosome quality control and in maturation of the 3' terminus of the 16S rRNA. This is Endoribonuclease YbeY from Pseudomonas savastanoi pv. phaseolicola (strain 1448A / Race 6) (Pseudomonas syringae pv. phaseolicola (strain 1448A / Race 6)).